The sequence spans 212 residues: Phosphoribosylglycinamide formyltransferase (212 aa).

A N(1)-(5-phospho-beta-D-ribosyl)glycinamide-binding site is contributed by 12–14; sequence GTN. (6R)-10-formyltetrahydrofolate contacts are provided by residues 90 to 93 and N107; that span reads MKIL. H109 functions as the Proton donor in the catalytic mechanism.

The protein belongs to the GART family.

It carries out the reaction N(1)-(5-phospho-beta-D-ribosyl)glycinamide + (6R)-10-formyltetrahydrofolate = N(2)-formyl-N(1)-(5-phospho-beta-D-ribosyl)glycinamide + (6S)-5,6,7,8-tetrahydrofolate + H(+). It participates in purine metabolism; IMP biosynthesis via de novo pathway; N(2)-formyl-N(1)-(5-phospho-D-ribosyl)glycinamide from N(1)-(5-phospho-D-ribosyl)glycinamide (10-formyl THF route): step 1/1. Its function is as follows. Catalyzes the transfer of a formyl group from 10-formyltetrahydrofolate to 5-phospho-ribosyl-glycinamide (GAR), producing 5-phospho-ribosyl-N-formylglycinamide (FGAR) and tetrahydrofolate. This Haemophilus influenzae (strain ATCC 51907 / DSM 11121 / KW20 / Rd) protein is Phosphoribosylglycinamide formyltransferase.